The following is a 139-amino-acid chain: Transcription antitermination protein NusB (139 aa).

Belongs to the NusB family.

Functionally, involved in transcription antitermination. Required for transcription of ribosomal RNA (rRNA) genes. Binds specifically to the boxA antiterminator sequence of the ribosomal RNA (rrn) operons. The protein is Transcription antitermination protein NusB of Enterobacter sp. (strain 638).